The following is a 439-amino-acid chain: MMPLVAIVGRPNVGKSTLFNRLVGRRKAIVDDMPGVTRDRNYETVTRFEAPFILIDTGGFEPVSEDRLLQQMREQSQLAMEEADVIIFLMDGRAGLTPSDVEVVEMLRRVKKPVFFVVNKVDGEKIENEAADFYTLGIGTLHTISAEHNRGVNDLMEEVVAALPKSSTRLDDEDITRIAVVGRPNVGKSSLVNRLLGFERVVANPTPGTTRDSVDTLFACNKKRYLLIDTAGIRRKGKTTQKLEKYSVVDSLRSIERADVVLIIINAEEGVTEQDERIAGYAFEAGKACIFVVNKWDTLAKDNSTLGKFVDQIKTEFKYLSFAPIVFVSAKSGQRINRVMEEVERVMAQYSKRVSTSDLNRVFSEAVEKHHAPLSHGRRVKFYFATQVGTKPPTFVLFTNQPEGVHFSYERYLMNKFREAFDFTGSPLKIIFRGRDRRE.

2 consecutive EngA-type G domains span residues 3–167 (PLVA…PKSS) and 176–351 (TRIA…AQYS). GTP-binding positions include 9 to 16 (GRPNVGKS), 56 to 60 (DTGGF), 119 to 122 (NKVD), 182 to 189 (GRPNVGKS), 229 to 233 (DTAGI), and 294 to 297 (NKWD). The region spanning 352 to 436 (KRVSTSDLNR…PLKIIFRGRD (85 aa)) is the KH-like domain.

The protein belongs to the TRAFAC class TrmE-Era-EngA-EngB-Septin-like GTPase superfamily. EngA (Der) GTPase family. Associates with the 50S ribosomal subunit.

Functionally, GTPase that plays an essential role in the late steps of ribosome biogenesis. The chain is GTPase Der from Geobacter metallireducens (strain ATCC 53774 / DSM 7210 / GS-15).